A 211-amino-acid polypeptide reads, in one-letter code: Outer-membrane lipoprotein carrier protein (211 aa).

The first 24 residues, 1 to 24 (MRNRILVSACAALAMFAMQAPAHA), serve as a signal peptide directing secretion.

It belongs to the LolA family. As to quaternary structure, monomer.

The protein localises to the periplasm. Functionally, participates in the translocation of lipoproteins from the inner membrane to the outer membrane. Only forms a complex with a lipoprotein if the residue after the N-terminal Cys is not an aspartate (The Asp acts as a targeting signal to indicate that the lipoprotein should stay in the inner membrane). This chain is Outer-membrane lipoprotein carrier protein, found in Cupriavidus taiwanensis (strain DSM 17343 / BCRC 17206 / CCUG 44338 / CIP 107171 / LMG 19424 / R1) (Ralstonia taiwanensis (strain LMG 19424)).